Reading from the N-terminus, the 247-residue chain is Protein NipSnap homolog 3A (247 aa).

N6-acetyllysine is present on residues Lys-48 and Lys-166.

Belongs to the NipSnap family.

It localises to the cytoplasm. It is found in the cytosol. This is Protein NipSnap homolog 3A (NIPSNAP3A) from Pongo abelii (Sumatran orangutan).